Reading from the N-terminus, the 863-residue chain is Alanine--tRNA ligase (863 aa).

Zn(2+) is bound by residues histidine 552, histidine 556, cysteine 656, and histidine 660.

It belongs to the class-II aminoacyl-tRNA synthetase family. The cofactor is Zn(2+).

The protein resides in the cytoplasm. It catalyses the reaction tRNA(Ala) + L-alanine + ATP = L-alanyl-tRNA(Ala) + AMP + diphosphate. Its function is as follows. Catalyzes the attachment of alanine to tRNA(Ala) in a two-step reaction: alanine is first activated by ATP to form Ala-AMP and then transferred to the acceptor end of tRNA(Ala). Also edits incorrectly charged Ser-tRNA(Ala) and Gly-tRNA(Ala) via its editing domain. This is Alanine--tRNA ligase from Alcanivorax borkumensis (strain ATCC 700651 / DSM 11573 / NCIMB 13689 / SK2).